The primary structure comprises 471 residues: GTPase Der (471 aa).

EngA-type G domains are found at residues 5-168 (PVIA…TDLE) and 186-359 (IRVA…DSAF). GTP-binding positions include 11–18 (GRPNVGKS), 58–62 (DTGGI), 120–123 (NKTD), 192–199 (GRPNVGKS), 239–243 (DTAGV), and 304–307 (NKWD). The 85-residue stretch at 360-444 (IKIGTNELTR…PIRLEFKSGT (85 aa)) folds into the KH-like domain.

It belongs to the TRAFAC class TrmE-Era-EngA-EngB-Septin-like GTPase superfamily. EngA (Der) GTPase family. As to quaternary structure, associates with the 50S ribosomal subunit.

Its function is as follows. GTPase that plays an essential role in the late steps of ribosome biogenesis. The sequence is that of GTPase Der from Alcanivorax borkumensis (strain ATCC 700651 / DSM 11573 / NCIMB 13689 / SK2).